Consider the following 473-residue polypeptide: Serine/threonine-protein phosphatase 2A activator 1 (473 aa).

Positions 360–473 (NAVPPPTSAH…HVPTKAPWAK (114 aa)) are disordered. Over residues 368 to 378 (AHMSTTQSQSR) the composition is skewed to polar residues. Low complexity predominate over residues 395 to 416 (APWATATQAAPPAGAGTAAPWA).

It belongs to the PTPA-type PPIase family.

It localises to the cytoplasm. The protein resides in the nucleus. The catalysed reaction is [protein]-peptidylproline (omega=180) = [protein]-peptidylproline (omega=0). Functionally, PPIases accelerate the folding of proteins. It catalyzes the cis-trans isomerization of proline imidic peptide bonds in oligopeptides. Acts as a regulatory subunit for PP2A-like phosphatases modulating their activity or substrate specificity, probably by inducing a conformational change in the catalytic subunit, a direct target of the PPIase. Can reactivate inactive phosphatase PP2A-phosphatase methylesterase complexes (PP2Ai) in presence of ATP and Mg(2+) by dissociating the inactive form from the complex. This is Serine/threonine-protein phosphatase 2A activator 1 (rrd1) from Aspergillus fumigatus (strain ATCC MYA-4609 / CBS 101355 / FGSC A1100 / Af293) (Neosartorya fumigata).